We begin with the raw amino-acid sequence, 1112 residues long: Patronin (microtubule-binding protein) homolog (1112 aa).

The region spanning 165 to 286 (IDSVDALLFW…VNAFLADLFV (122 aa)) is the Calponin-homology (CH) domain. Disordered regions lie at residues 324-358 (AARSSMHNRNRPRMYNPPPAVSHSQGPSRSVSRMS), 485-504 (EGEDGTQSARLNRASSQPSV), 542-566 (MQQQMQQQQQQQAQAQSNYASPSQL), and 788-834 (NHSE…GSGE). Composition is skewed to polar residues over residues 345–358 (SHSQGPSRSVSRMS) and 489–504 (GTQSARLNRASSQPSV). The segment covering 542–557 (MQQQMQQQQQQQAQAQ) has biased composition (low complexity). Residues 802–816 (QNDRDDLSTGRKSDD) are compositionally biased toward basic and acidic residues. Residues 850-914 (ALIAKTMKRK…YKRKKLEKEL (65 aa)) adopt a coiled-coil conformation. The disordered stretch occupies residues 916–965 (AELSARSTGRGHSQPPFIRTKSQMSEVTESSRQNTPRMRGQSSVEQRVSV). Residues 935 to 951 (TKSQMSEVTESSRQNTP) are compositionally biased toward polar residues. The segment covering 956–965 (QSSVEQRVSV) has biased composition (low complexity). Positions 972 to 1109 (THKLYAKTVT…RIPHSGTPAH (138 aa)) constitute a CKK domain.

The protein belongs to the CAMSAP1 family. As to quaternary structure, interacts with dapk-1. Expressed in larval and adult epidermis, intestine and pharynx. Broadly expressed in the nervous system. Expressed in body wall muscle cells.

It localises to the cell projection. Its subcellular location is the axon. The protein resides in the dendrite. The protein localises to the cell membrane. It is found in the sarcolemma. It localises to the cytoplasm. Its subcellular location is the cytosol. The protein resides in the cytoskeleton. The protein localises to the perikaryon. Required for microtubule stability and anchorage by binding to the minus ends of microtubules. Acts redundantly with noca-1 to control circumferential microtubule assembly along the body which is necessary for larval development, viability, morphology and integrity of the epidermis. Promotes microtubule stability and polymerization in neurons. Involved in the maintenance of neurite morphology in ALM and PLM neurons. May play a role in synaptic protein localization in the PLM neuron. May act upstream of dlk-1 in neuronal regeneration. Plays a role in postembryonic epidermal tissue integrity and wound healing. The polypeptide is Patronin (microtubule-binding protein) homolog (Caenorhabditis elegans).